Here is a 1881-residue protein sequence, read N- to C-terminus: Ankyrin-1 (1881 aa).

Positions 1-827 (MPYSVGFREA…EDEGEELISF (827 aa)) are 89 kDa domain. ANK repeat units follow at residues 44–73 (NGLN…ILET), 77–106 (KGNT…NVNA), 110–139 (KGFT…NQNV), 143–172 (DGFT…KGKV), 174–201 (LPAL…NPDV), 205–234 (TGFT…SVNF), 238–267 (NGIT…QIET), 271–300 (DELT…PIQA), 304–333 (NGLS…EIDD), 337–366 (DHLT…KPNS), 370–399 (NGFT…SIDA), 403–432 (SGLT…SPNV), 436–465 (KVET…KVNA), 469–498 (DDQT…NPNL), 502–531 (AGHT…SQAC), 535–564 (KGFT…HPNA), 568–597 (NGLT…SPHS), 601–630 (NGYT…SANA), 634–663 (QGVT…NGNL), 667–696 (SGLT…MVDA), 700–729 (MGYT…DVNA), 733–762 (LGYS…SPNE), and 766–795 (DGTT…ETSF). N105 bears the (3S)-3-hydroxyasparagine; by HIF1AN; partial mark. At N233 the chain carries (3S)-3-hydroxyasparagine; by HIF1AN; partial. S429 bears the Phosphoserine mark. N431 and N464 each carry (3S)-3-hydroxyasparagine; by HIF1AN; partial. N629 and N662 each carry (3S)-3-hydroxyasparagine; by HIF1AN; partial. D695 is subject to (3S)-3-hydroxyaspartate; by HIF1AN; partial. N728 is modified ((3S)-3-hydroxyasparagine; by HIF1AN; partial). S759 is modified (phosphoserine). Residue N761 is modified to (3S)-3-hydroxyasparagine; by HIF1AN; partial. 4 positions are modified to phosphoserine: S781, S817, S834, and S856. A disordered region spans residues 875 to 904 (EEQEQASKEYDEDSLIPSSPATETSDNISP). The span at 890-904 (IPSSPATETSDNISP) shows a compositional bias: polar residues. ZU5 domains are found at residues 913–1068 (FLVS…IMSR) and 1070–1216 (CQDY…LSDC). T961 carries the phosphothreonine modification. Residue Y1073 is modified to Phosphotyrosine. S1082 is modified (phosphoserine). The interval 1234–1362 (TAVPYMAKFV…QHILCHLNIT (129 aa)) is UPA domain. Residues T1378 and T1380 each carry the phosphothreonine modification. Residues 1383-1881 (ALRYSILSES…SKDHTSTPNP (499 aa)) are 55 kDa regulatory domain. Phosphoserine is present on residues S1390, S1392, and S1396. Residue T1400 is modified to Phosphothreonine. The region spanning 1403 to 1487 (AEMKMAVISE…EIVNMLEGSG (85 aa)) is the Death domain. A phosphoserine mark is found at S1428 and S1486. The interval 1486–1510 (SGRQSRNLKPDRRHTDRDYSLSPSQ) is disordered. Residues 1493–1504 (LKPDRRHTDRDY) are compositionally biased toward basic and acidic residues. Phosphoserine occurs at positions 1523 and 1533. Residues 1583-1613 (SSLECSKAEDSDATGHEWKLEGALSEEPRGP) are disordered. Residues 1588–1612 (SKAEDSDATGHEWKLEGALSEEPRG) are compositionally biased toward basic and acidic residues. S1617 bears the Phosphoserine mark. Disordered regions lie at residues 1637–1703 (LLEQ…LQDW), 1718–1791 (QGSW…EAKN), and 1840–1859 (ADAA…EDPS). Positions 1642–1658 (EGQRSEEKLPGSKRQDD) are enriched in basic and acidic residues. S1666, S1671, S1686, S1690, and S1696 each carry phosphoserine. The span at 1683 to 1694 (ITHSPTVSQVTE) shows a compositional bias: polar residues. 2 stretches are compositionally biased toward polar residues: residues 1718-1739 (QGSW…STMT) and 1758-1771 (SEHT…AESS). The segment covering 1772 to 1781 (QADRDRRQQG) has biased composition (basic and acidic residues).

In terms of assembly, component of the ankyrin-1 complex in the erythrocyte, composed of ANK1, RHCE, RHAG, SLC4A1, EPB42, GYPA, GYPB and AQP1. Interacts with a number of integral membrane proteins and cytoskeletal proteins. Interacts (via N-terminus) with SPTB/spectrin (beta chain). Also interacts with TTN/titin. Isoform Mu17 interacts with OBSCN isoform 3/obscurin. Interacts with HIF1AN. Interacts (via ANK 1-5 repeats) with RHCE; this interaction mediates the primary membrane attachment site for ANK1. Interacts (via ANK 1-2 repeats) with AQP1 (via the N-terminal). Interacts (via ANK 1-13 repeats) with EPB42. Interacts directly with SLC4A1 (via the cytoplasmic domain); this interaction is mediated by the SLC4A1 Band 3-II and Band 3-III dimers. Post-translationally, regulated by phosphorylation. In terms of processing, palmitoylated. Hydroxylated by HIF1AN at several asparagine and 1 aspartate residue within ANK repeat region. Hydroxylation seems to increase the conformational stability of this region and may also modulate protein-protein interactions mediated by the ANK repeat region. Post-translationally, (Microbial infection) Probably cleaved by P.falciparum SERA6; the cleavage probably causes the disruption of the actin cytoskeleton and the rupture of the erythrocyte cell membrane releasing the merozoites. Isoform Mu17, isoform Mu18, isoform Mu19 and isoform Mu20 are expressed in skeletal muscle. Isoform Br21 is expressed in brain.

It localises to the cytoplasm. The protein localises to the cytoskeleton. The protein resides in the membrane. It is found in the myofibril. Its subcellular location is the sarcomere. It localises to the m line. The protein localises to the sarcoplasmic reticulum. Component of the ankyrin-1 complex, a multiprotein complex involved in the stability and shape of the erythrocyte membrane. Attaches integral membrane proteins to cytoskeletal elements; binds to the erythrocyte membrane protein band 4.2, to Na-K ATPase, to the lymphocyte membrane protein GP85, and to the cytoskeletal proteins fodrin, tubulin, vimentin and desmin. Erythrocyte ankyrins also link spectrin (beta chain) to the cytoplasmic domain of the erythrocytes anion exchange protein; they retain most or all of these binding functions. In terms of biological role, together with obscurin in skeletal muscle may provide a molecular link between the sarcoplasmic reticulum and myofibrils. The sequence is that of Ankyrin-1 from Homo sapiens (Human).